The following is a 1767-amino-acid chain: E3 ubiquitin-protein ligase listerin (1767 aa).

HEAT repeat units lie at residues 59–96 (SLVDSDFRMVLRKLSKKDVTTKLKAMQEFGIMCTERDT), 100–138 (KGVLPYWPRIFCKISLDHDRRVREATQQAFEKLILKVKK), 273–314 (SAYF…VVCP), 335–372 (NAKKSVFPKLMAMIREGGRGLAAVMYPYLLPFISKLPQ), 380–418 (DFFKNFLTSLVTGLSTERTKSSSSECSAVISAFFECLRF), 433–473 (LINE…KADA), and 509–547 (VKSVLCVSSLVGVLQRPRSSLKLHRKKTAQVRFAINIPE). The disordered stretch occupies residues 550-583 (KGDEKSMSSEGENSEGSDGGAQSPLSNTSSDLVS). A compositionally biased stretch (polar residues) spans 572–581 (SPLSNTSSDL). HEAT repeat units follow at residues 621-658 (LDSFSSVQVFNILLSDKQKNVVKAKPLEITKLAEKNPA), 676-714 (EDGGFLVDILYSALRCCDSGVERKEVLDDLTKEDLKWSS), 1067-1104 (SETSSLLQLLFDRSRKNGTLWSLIIAKLILSRSISSDE), 1183-1226 (QLLH…IMRF), 1315-1353 (GIHSLLLPLLVNAIGENKDLSETSFQNAMLKPMCETLTY), 1378-1415 (EHLQTLLNTLTPLLLFRARPVQIAAYHMLCKLMPELPQ), and 1476-1513 (LGYLLTWKLILTFFKAASSQLRALYSMYLRKTKSLNKL). The segment at 1716–1763 (CMICFSVIHGFNYSLPKKACRTCKKKFHSACLYKWFTSSNKSTCPLCR) adopts an RING-type zinc-finger fold.

This sequence belongs to the LTN1 family. As to quaternary structure, component of the ribosome quality control complex (RQC), composed of at least the E3 ubiquitin ligase LTN1 and NEMF associated with the 60S ribosomal subunit. The complex probably also contains TCF25 as well as VCP/p97 and its ubiquitin-binding cofactors. Autoubiquitinated. As to expression, widely expressed, including in the brain and spinal cord.

The protein resides in the cytoplasm. Its subcellular location is the cytosol. The enzyme catalyses S-ubiquitinyl-[E2 ubiquitin-conjugating enzyme]-L-cysteine + [acceptor protein]-L-lysine = [E2 ubiquitin-conjugating enzyme]-L-cysteine + N(6)-ubiquitinyl-[acceptor protein]-L-lysine.. It functions in the pathway protein modification; protein ubiquitination. E3 ubiquitin-protein ligase. component of the ribosome quality control complex (RQC), a ribosome-associated complex that mediates ubiquitination and extraction of incompletely synthesized nascent chains for proteasomal degradation. Within the RQC complex, LTN1 is recruited to stalled 60S ribosomal subunits by NEMF and mediates ubiquitination of stalled nascent chains. Ubiquitination leads to VCP/p97 recruitment for extraction and degradation of the incomplete translation product. In Mus musculus (Mouse), this protein is E3 ubiquitin-protein ligase listerin (Ltn1).